Consider the following 92-residue polypeptide: PqqA binding protein (92 aa).

This sequence belongs to the PqqD family. In terms of assembly, monomer. Interacts with PqqE.

It participates in cofactor biosynthesis; pyrroloquinoline quinone biosynthesis. Functionally, functions as a PqqA binding protein and presents PqqA to PqqE, in the pyrroloquinoline quinone (PQQ) biosynthetic pathway. The polypeptide is PqqA binding protein (Klebsiella pneumoniae (strain 342)).